The sequence spans 160 residues: Small ribosomal subunit protein uS9 (160 aa).

Belongs to the universal ribosomal protein uS9 family.

The polypeptide is Small ribosomal subunit protein uS9 (Rhodopseudomonas palustris (strain ATCC BAA-98 / CGA009)).